Reading from the N-terminus, the 205-residue chain is Heme-binding protein 2 (205 aa).

Residues 1–39 are disordered; sequence MAEPLQPDPGAAEDAAAQAVETPGWKAPEDAGPQPGSYE. N-acetylalanine is present on Ala-2. Phosphoserine is present on Ser-181.

It belongs to the HEBP family. In terms of assembly, monomer. Interacts with LRPPRC. May interact with BCL2L1; an interaction with BCL2L1 was observed using a peptide, but not with the full-length protein. The full-length protein would have to undergo a major conformation change for the interaction to occur. Interacts with PDCD6. In terms of tissue distribution, detected in placenta.

The protein localises to the cytoplasm. It is found in the mitochondrion. In terms of biological role, can promote mitochondrial permeability transition and facilitate necrotic cell death under different types of stress conditions. This chain is Heme-binding protein 2 (HEBP2), found in Homo sapiens (Human).